The primary structure comprises 476 residues: NADH-quinone oxidoreductase subunit N (476 aa).

Transmembrane regions (helical) follow at residues 10–30 (AVLP…IGAI), 42–62 (LAIA…AVTI), 77–97 (FMKV…VDWL), 108–128 (AVLV…GDLI), 129–149 (ALYL…AINR), 162–182 (FVLG…IYGF), 202–222 (LVFG…AVPF), 234–254 (PTPV…AVFV), 268–288 (WQQI…FAAI), 296–316 (LLAY…AAGT), 323–343 (VLLY…CVLA), 368–388 (ALAL…AGFV), 392–412 (YVFL…GVVA), and 445–465 (AVLA…TPLI).

This sequence belongs to the complex I subunit 2 family. As to quaternary structure, NDH-1 is composed of 14 different subunits. Subunits NuoA, H, J, K, L, M, N constitute the membrane sector of the complex.

The protein localises to the cell inner membrane. It catalyses the reaction a quinone + NADH + 5 H(+)(in) = a quinol + NAD(+) + 4 H(+)(out). Its function is as follows. NDH-1 shuttles electrons from NADH, via FMN and iron-sulfur (Fe-S) centers, to quinones in the respiratory chain. The immediate electron acceptor for the enzyme in this species is believed to be ubiquinone. Couples the redox reaction to proton translocation (for every two electrons transferred, four hydrogen ions are translocated across the cytoplasmic membrane), and thus conserves the redox energy in a proton gradient. This Azorhizobium caulinodans (strain ATCC 43989 / DSM 5975 / JCM 20966 / LMG 6465 / NBRC 14845 / NCIMB 13405 / ORS 571) protein is NADH-quinone oxidoreductase subunit N.